A 145-amino-acid polypeptide reads, in one-letter code: Transcriptional regulator SlyA (145 aa).

Positions Glu-2–Lys-135 constitute an HTH marR-type domain. The segment at residues Gln-49–Glu-72 is a DNA-binding region (H-T-H motif).

Belongs to the SlyA family. Homodimer.

In terms of biological role, transcription regulator that can specifically activate or repress expression of target genes. The sequence is that of Transcriptional regulator SlyA from Pectobacterium carotovorum subsp. carotovorum (strain PC1).